Here is a 160-residue protein sequence, read N- to C-terminus: Major strawberry allergen Fra a 1-2 (160 aa).

Belongs to the BetVI family. As to quaternary structure, monomer. Interacts with AP. As to expression, highly expressed in ripe red fruits. Expressed in roots and white fruits. Expressed at low levels in open flowers.

In terms of biological role, involved in the control of flavonoid biosynthesis in fruits, probably by binding directly to natural flavonoids. Binds the natural flavonoid myricetin with affinities in the low micromolar range. The protein is Major strawberry allergen Fra a 1-2 of Fragaria ananassa (Strawberry).